Reading from the N-terminus, the 762-residue chain is cGMP-dependent protein kinase 2 (762 aa).

Residues 1–25 (MGNGSVKPKHSKHPDGHSGNLTTDA) are disordered. A lipid anchor (N-myristoyl glycine) is attached at G2. Residues 23-85 (TDALRNKVTE…CIQLNKLQDV (63 aa)) are a coiled coil. A phosphoserine mark is found at S110 and S117. The disordered stretch occupies residues 117 to 138 (SRRGAKAGVSAEPTTRTYDLNK). The cGMP-binding, high affinity; cAMP-binding, moderate affinity stretch occupies residues 168 to 283 (FLKRLDPQQI…DEQYRNFLRS (116 aa)). 3',5'-cyclic AMP is bound by residues 232 to 235 (GELA) and 242 to 243 (RT). 3',5'-cyclic GMP contacts are provided by residues 232-235 (GELA), 242-243 (RT), K347, 356-359 (GEKA), 366-367 (RS), D412, and R415. Residues 286-416 (LLKNLPEDKL…NLNRDDEKRH (131 aa)) are cGMP-binding, high affinity; cAMP-binding, low affinity. S431 is subject to Phosphoserine. Residues 453-711 (LEIIATLGVG…INDIKKHRWL (259 aa)) enclose the Protein kinase domain. ATP contacts are provided by residues 459 to 467 (LGVGGFGRV) and K482. D576 functions as the Proton acceptor in the catalytic mechanism. Residue T609 is modified to Phosphothreonine. One can recognise an AGC-kinase C-terminal domain in the interval 712-762 (NGFNWEGLKARSLPSPLQRELKGPIDHSYFDKYPPEKGMPPDELSGWDKDF). A disordered region spans residues 740–762 (YFDKYPPEKGMPPDELSGWDKDF).

This sequence belongs to the protein kinase superfamily. AGC Ser/Thr protein kinase family. cGMP subfamily. As to quaternary structure, interacts with GRIA1/GLUR1. Myristoylation mediates membrane localization. Highly concentrated in brain, lung and intestinal mucosa.

It localises to the apical cell membrane. The enzyme catalyses L-seryl-[protein] + ATP = O-phospho-L-seryl-[protein] + ADP + H(+). It carries out the reaction L-threonyl-[protein] + ATP = O-phospho-L-threonyl-[protein] + ADP + H(+). Its activity is regulated as follows. Binding of cGMP results in enzyme activation. Its function is as follows. Crucial regulator of intestinal secretion and bone growth. Phosphorylates and activates CFTR on the plasma membrane. Plays a key role in intestinal secretion by regulating cGMP-dependent translocation of CFTR in jejunum. Acts downstream of NMDAR to activate the plasma membrane accumulation of GRIA1/GLUR1 in synapse and increase synaptic plasticity. Phosphorylates GRIA1/GLUR1 at Ser-863. Acts as a regulator of gene expression and activator of the extracellular signal-regulated kinases MAPK3/ERK1 and MAPK1/ERK2 in mechanically stimulated osteoblasts. Under fluid shear stress, mediates ERK activation and subsequent induction of FOS, FOSL1/FRA1, FOSL2/FRA2 and FOSB that play a key role in the osteoblast anabolic response to mechanical stimulation. This is cGMP-dependent protein kinase 2 (PRKG2) from Homo sapiens (Human).